The chain runs to 107 residues: MAGSALAVRARLGVWGMRVLQTRGFGSDSSESMDSGAGSIREAGGAFGKREKAEEDRYFREKTREQLAALKKHHEDEIDHHSKEIERLQKQIERHKKKIKYLKNSEH.

A mitochondrion-targeting transit peptide spans 1–25 (MAGSALAVRARLGVWGMRVLQTRGF). The segment at 25–58 (FGSDSSESMDSGAGSIREAGGAFGKREKAEEDRY) is disordered. The segment at 26–52 (GSDSSESMDSGAGSIREAGGAFGKREK) is N-terminal inhibitory region. Ser39 is modified (phosphoserine). The span at 48 to 58 (GKREKAEEDRY) shows a compositional bias: basic and acidic residues. A coiled-coil region spans residues 60-107 (REKTREQLAALKKHHEDEIDHHSKEIERLQKQIERHKKKIKYLKNSEH). The antiparallel alpha-helical coiled coil region stretch occupies residues 74–106 (HEDEIDHHSKEIERLQKQIERHKKKIKYLKNSE). Lys103 is modified (N6-succinyllysine).

The protein belongs to the ATPase inhibitor family. Homodimer; represents the active form and is present at a pH value below 6.5. Homotetramer; represents the inactive form and is present at a pH value above 7.0.

The protein resides in the mitochondrion. Its function is as follows. Endogenous F(1)F(o)-ATPase inhibitor limiting ATP depletion when the mitochondrial membrane potential falls below a threshold and the F(1)F(o)-ATP synthase starts hydrolyzing ATP to pump protons out of the mitochondrial matrix. Required to avoid the consumption of cellular ATP when the F(1)F(o)-ATP synthase enzyme acts as an ATP hydrolase. Indirectly acts as a regulator of heme synthesis in erythroid tissues: regulates heme synthesis by modulating the mitochondrial pH and redox potential, allowing FECH to efficiently catalyze the incorporation of iron into protoporphyrin IX to produce heme. This Rattus norvegicus (Rat) protein is ATPase inhibitor, mitochondrial.